Here is a 309-residue protein sequence, read N- to C-terminus: Porphobilinogen deaminase (309 aa).

The residue at position 241 (Cys-241) is an S-(dipyrrolylmethanemethyl)cysteine.

This sequence belongs to the HMBS family. Monomer. Dipyrromethane is required as a cofactor.

It catalyses the reaction 4 porphobilinogen + H2O = hydroxymethylbilane + 4 NH4(+). Its pathway is porphyrin-containing compound metabolism; protoporphyrin-IX biosynthesis; coproporphyrinogen-III from 5-aminolevulinate: step 2/4. Functionally, tetrapolymerization of the monopyrrole PBG into the hydroxymethylbilane pre-uroporphyrinogen in several discrete steps. In Campylobacter concisus (strain 13826), this protein is Porphobilinogen deaminase.